We begin with the raw amino-acid sequence, 618 residues long: Phostensin (618 aa).

A compositionally biased stretch (basic and acidic residues) spans 15 to 33 (RRQEEAAVRGREKAERERL). Positions 15–505 (RRQEEAAVRG…PATADAAVPG (491 aa)) are disordered. Position 54 is a phosphoserine (S54). The span at 96 to 109 (QQQQQQQQQQQQQQ) shows a compositional bias: low complexity. 2 stretches are compositionally biased toward basic and acidic residues: residues 110-160 (RSEE…ERRL) and 173-197 (LESR…EVRK). 4 positions are modified to phosphoserine: S131, S139, S181, and S201. At T205 the chain carries Phosphothreonine. S231 is modified (phosphoserine). Basic and acidic residues-rich tracts occupy residues 234–245 (DSDHEKLGLTDA) and 271–289 (SGEE…EERT). The segment covering 308–319 (EAAGSSSGGVEA) has biased composition (low complexity). The span at 348-358 (KVRDRTPRDTE) shows a compositional bias: basic and acidic residues. Residues 429 to 451 (RPPPAAPLSPPPPAPPAPQPPGD) show a composition bias toward pro residues. Residue S437 is modified to Phosphoserine. K462 is subject to N6-acetyllysine. Low complexity predominate over residues 485-505 (APPAAAATPATPATADAAVPG). S535 is subject to Phosphoserine. The tract at residues 556–594 (YQYPSESSVLEELGPEPEAPSAPSPPAAQPDDEEDEEEL) is disordered. Pro residues predominate over residues 572 to 583 (PEAPSAPSPPAA). Residues 585–594 (PDDEEDEEEL) are compositionally biased toward acidic residues.

In terms of assembly, interacts with Protein phosphatase 1 (PP1).

The protein resides in the cytoplasm. It is found in the cytoskeleton. Its function is as follows. May target protein phosphatase 1 to F-actin cytoskeleton. In Sus scrofa (Pig), this protein is Phostensin (PPP1R18).